Here is a 158-residue protein sequence, read N- to C-terminus: MSGLTHFDAQGAAHMVDVSDKEVTDRVAIARGAVRMAPETLAMIEGGRAKKGDVLAVARLAGIMGAKKTADLIPLCHPLPITKVALELVPDADLPGVRIEATVKTSGQTGVEMEALTAVSVAALTIYDMVKAVDKAMQLTDIRLAFKDGGKSGRFEAE.

Substrate is bound by residues 75-77 and 113-114; these read LCH and ME. Asp-128 is a catalytic residue.

The protein belongs to the MoaC family. As to quaternary structure, homohexamer; trimer of dimers.

The catalysed reaction is (8S)-3',8-cyclo-7,8-dihydroguanosine 5'-triphosphate = cyclic pyranopterin phosphate + diphosphate. The protein operates within cofactor biosynthesis; molybdopterin biosynthesis. Its function is as follows. Catalyzes the conversion of (8S)-3',8-cyclo-7,8-dihydroguanosine 5'-triphosphate to cyclic pyranopterin monophosphate (cPMP). In Dinoroseobacter shibae (strain DSM 16493 / NCIMB 14021 / DFL 12), this protein is Cyclic pyranopterin monophosphate synthase.